The primary structure comprises 430 residues: Tol-Pal system protein TolB (430 aa).

Positions 1 to 21 (MKQALRVAFGFLILWASVLHA) are cleaved as a signal peptide.

This sequence belongs to the TolB family. The Tol-Pal system is composed of five core proteins: the inner membrane proteins TolA, TolQ and TolR, the periplasmic protein TolB and the outer membrane protein Pal. They form a network linking the inner and outer membranes and the peptidoglycan layer.

Its subcellular location is the periplasm. Functionally, part of the Tol-Pal system, which plays a role in outer membrane invagination during cell division and is important for maintaining outer membrane integrity. TolB occupies a key intermediary position in the Tol-Pal system because it communicates directly with both membrane-embedded components, Pal in the outer membrane and TolA in the inner membrane. The polypeptide is Tol-Pal system protein TolB (Shigella flexneri).